Consider the following 74-residue polypeptide: Small ribosomal subunit protein bS18 (74 aa).

Belongs to the bacterial ribosomal protein bS18 family. As to quaternary structure, part of the 30S ribosomal subunit. Forms a tight heterodimer with protein bS6.

Functionally, binds as a heterodimer with protein bS6 to the central domain of the 16S rRNA, where it helps stabilize the platform of the 30S subunit. The protein is Small ribosomal subunit protein bS18 of Novosphingobium aromaticivorans (strain ATCC 700278 / DSM 12444 / CCUG 56034 / CIP 105152 / NBRC 16084 / F199).